Reading from the N-terminus, the 251-residue chain is Imidazole glycerol phosphate synthase subunit HisF (251 aa).

Active-site residues include Asp-11 and Asp-130.

This sequence belongs to the HisA/HisF family. Heterodimer of HisH and HisF.

It is found in the cytoplasm. The enzyme catalyses 5-[(5-phospho-1-deoxy-D-ribulos-1-ylimino)methylamino]-1-(5-phospho-beta-D-ribosyl)imidazole-4-carboxamide + L-glutamine = D-erythro-1-(imidazol-4-yl)glycerol 3-phosphate + 5-amino-1-(5-phospho-beta-D-ribosyl)imidazole-4-carboxamide + L-glutamate + H(+). Its pathway is amino-acid biosynthesis; L-histidine biosynthesis; L-histidine from 5-phospho-alpha-D-ribose 1-diphosphate: step 5/9. Its function is as follows. IGPS catalyzes the conversion of PRFAR and glutamine to IGP, AICAR and glutamate. The HisF subunit catalyzes the cyclization activity that produces IGP and AICAR from PRFAR using the ammonia provided by the HisH subunit. In Chlorobium luteolum (strain DSM 273 / BCRC 81028 / 2530) (Pelodictyon luteolum), this protein is Imidazole glycerol phosphate synthase subunit HisF.